The chain runs to 471 residues: Rho GTPase-activating protein 15 (471 aa).

Residues 1–20 (MQKSTNSDIPVETLNPTRQG) are disordered. Ser-43 carries the post-translational modification Phosphoserine. In terms of domain architecture, PH spans 79 to 189 (MVEKEGYLQK…WFHAIKNAID (111 aa)). Phosphoserine occurs at positions 196, 199, and 243. One can recognise a Rho-GAP domain in the interval 281–470 (SHLHTLCERE…LMLSAYDQIF (190 aa)).

The protein localises to the cytoplasm. Its subcellular location is the membrane. In terms of biological role, GTPase activator for the Rho-type GTPases by converting them to an inactive GDP-bound state. Has activity toward RAC1. Overexpression results in an increase in actin stress fibers and cell contraction. The polypeptide is Rho GTPase-activating protein 15 (ARHGAP15) (Bos taurus (Bovine)).